A 262-amino-acid polypeptide reads, in one-letter code: Hydroxyethylthiazole kinase (262 aa).

M50 lines the substrate pocket. ATP contacts are provided by R125 and T171. G198 is a substrate binding site.

This sequence belongs to the Thz kinase family. The cofactor is Mg(2+).

The catalysed reaction is 5-(2-hydroxyethyl)-4-methylthiazole + ATP = 4-methyl-5-(2-phosphooxyethyl)-thiazole + ADP + H(+). It functions in the pathway cofactor biosynthesis; thiamine diphosphate biosynthesis; 4-methyl-5-(2-phosphoethyl)-thiazole from 5-(2-hydroxyethyl)-4-methylthiazole: step 1/1. Functionally, catalyzes the phosphorylation of the hydroxyl group of 4-methyl-5-beta-hydroxyethylthiazole (THZ). This is Hydroxyethylthiazole kinase from Escherichia coli (strain 55989 / EAEC).